A 2108-amino-acid polypeptide reads, in one-letter code: General negative regulator of transcription subunit 1 (2108 aa).

2 coiled-coil regions span residues 795 to 813 (NVTL…KSLT) and 1021 to 1046 (MQQH…QQQQ). Residues 1323–1352 (QQQQLQKSRLNQPSQSAQPPGVNVPNPQGG) form a disordered region. Residues 1329–1339 (KSRLNQPSQSA) show a composition bias toward polar residues. The segment covering 1340-1352 (QPPGVNVPNPQGG) has biased composition (low complexity). Position 2102 is a phosphothreonine (T2102).

It belongs to the CNOT1 family. Forms a NOT protein complex that comprises NOT1, NOT2, NOT3, NOT4 and NOT5. Subunit of the 1.0 MDa CCR4-NOT core complex that contains CCR4, CAF1, NOT1, NOT2, NOT3, NOT4, NOT5, CAF40 and CAF130. In the complex interacts with CCR4, POP2, NOT2, NOT4 and NOT5. The core complex probably is part of a less characterized 1.9 MDa CCR4-NOT complex.

Its subcellular location is the cytoplasm. The protein resides in the nucleus. Functionally, acts as a component of the CCR4-NOT core complex, which in the nucleus seems to be a general transcription factor, and in the cytoplasm the major mRNA deadenylase involved in mRNA turnover. The NOT protein subcomplex negatively regulates the basal and activated transcription of many genes. Preferentially affects TC-type TATA element-dependent transcription. Could directly or indirectly inhibit component(s) of the general transcription machinery. This is General negative regulator of transcription subunit 1 (CDC39) from Saccharomyces cerevisiae (strain ATCC 204508 / S288c) (Baker's yeast).